Reading from the N-terminus, the 296-residue chain is DNA-3-methyladenine glycosylase (296 aa).

Serine 110 is subject to Phosphoserine. Residue aspartate 209 is the Proton acceptor of the active site.

This sequence belongs to the alkylbase DNA glycosidase AlkA family.

It localises to the nucleus. It catalyses the reaction Hydrolysis of alkylated DNA, releasing 3-methyladenine, 3-methylguanine, 7-methylguanine and 7-methyladenine.. In terms of biological role, hydrolysis of the deoxyribose N-glycosidic bond to excise 3-methyladenine or 7-methyladenine from the damaged DNA polymer formed by alkylation lesions. The polypeptide is DNA-3-methyladenine glycosylase (MAG1) (Saccharomyces cerevisiae (strain ATCC 204508 / S288c) (Baker's yeast)).